The primary structure comprises 239 residues: Ribonuclease HII (239 aa).

In terms of domain architecture, RNase H type-2 spans 18–231 (KIIVGLDEAG…SKNLLKEIEE (214 aa)). A divalent metal cation-binding residues include aspartate 24, glutamate 25, and aspartate 125.

Belongs to the RNase HII family. Requires Mn(2+) as cofactor. Mg(2+) serves as cofactor.

Its subcellular location is the cytoplasm. It carries out the reaction Endonucleolytic cleavage to 5'-phosphomonoester.. Endonuclease that specifically degrades the RNA of RNA-DNA hybrids. This is Ribonuclease HII from Methanococcus maripaludis (strain C5 / ATCC BAA-1333).